The sequence spans 112 residues: HLVSLQVYHYLHCINALRRAAYQHVYGAPTKEHLNHLDHCIDMLRQAAQCQSDLTPMLYFNPENDPNTMLIKSHQHSCRRFDLVNEWAMARSQCKGNTTCAIEVGKQVGGEM.

Short sequence motifs (HXXHC) lie at residues 9-13 (HYLHC) and 36-40 (HLDHC).

This sequence belongs to the ustYa family.

Its pathway is mycotoxin biosynthesis. UstYa family oxidase, part of the gene cluster that mediates the biosynthesis of the secondary metabolite victorin, the molecular basis for Victoria blight of oats. Within the pathway, vicYb catalyzes the oxidative cyclization of the core peptide. The pathway starts with the processing of the precursor vicA1 by several endopeptidases including kexin proteases as well as the cluster-specific S28 family peptidases vicPa and vicPb to produce 7 identical copies of the hexapeptide Gly-Leu-Lys-Leu-Ala-Phe. After being excised from the precursor peptide, the core peptides are cyclized and modified post-translationally by enzymes encoded within the gene cluster. The ustYa family oxidase vicYb is required for the formation of the macrocycle in victorin and the copper amine oxidases (CAOs) vicK1 and vicK2 are responsible for converting victorin to the active form by oxidizing the N-terminal glycyl residue in the peptides to glyoxylate. Relaxed substrate specificity of enzymes in the victorin biosynthetic pathway results in a metabolic grid that produces a set of analogs including victorinines B, C, E or HV-toxin M. This chain is UstYa family oxidase VicYb, found in Bipolaris victoriae (strain FI3) (Victoria blight of oats agent).